The sequence spans 578 residues: Proline--tRNA ligase (578 aa).

Belongs to the class-II aminoacyl-tRNA synthetase family. ProS type 1 subfamily. As to quaternary structure, homodimer.

It localises to the cytoplasm. It carries out the reaction tRNA(Pro) + L-proline + ATP = L-prolyl-tRNA(Pro) + AMP + diphosphate. Its function is as follows. Catalyzes the attachment of proline to tRNA(Pro) in a two-step reaction: proline is first activated by ATP to form Pro-AMP and then transferred to the acceptor end of tRNA(Pro). As ProRS can inadvertently accommodate and process non-cognate amino acids such as alanine and cysteine, to avoid such errors it has two additional distinct editing activities against alanine. One activity is designated as 'pretransfer' editing and involves the tRNA(Pro)-independent hydrolysis of activated Ala-AMP. The other activity is designated 'posttransfer' editing and involves deacylation of mischarged Ala-tRNA(Pro). The misacylated Cys-tRNA(Pro) is not edited by ProRS. In Burkholderia orbicola (strain AU 1054), this protein is Proline--tRNA ligase.